Reading from the N-terminus, the 513-residue chain is uncharacterized protein (513 aa).

Residues 11 to 219 (HLEVERKFDV…SKLARVLGAT (209 aa)) enclose the CYTH domain. One can recognise a CHAD domain in the interval 228-506 (PQPPADPVHR…LEAALRKLDK (279 aa)).

This is an uncharacterized protein from Mycobacterium tuberculosis (strain CDC 1551 / Oshkosh).